Consider the following 321-residue polypeptide: Lipoyl synthase (321 aa).

7 residues coordinate [4Fe-4S] cluster: Cys68, Cys73, Cys79, Cys94, Cys98, Cys101, and Ser308. In terms of domain architecture, Radical SAM core spans 80 to 297; it reads FNHGTATFMI…KEVALELGFT (218 aa).

It belongs to the radical SAM superfamily. Lipoyl synthase family. [4Fe-4S] cluster serves as cofactor.

It localises to the cytoplasm. It catalyses the reaction [[Fe-S] cluster scaffold protein carrying a second [4Fe-4S](2+) cluster] + N(6)-octanoyl-L-lysyl-[protein] + 2 oxidized [2Fe-2S]-[ferredoxin] + 2 S-adenosyl-L-methionine + 4 H(+) = [[Fe-S] cluster scaffold protein] + N(6)-[(R)-dihydrolipoyl]-L-lysyl-[protein] + 4 Fe(3+) + 2 hydrogen sulfide + 2 5'-deoxyadenosine + 2 L-methionine + 2 reduced [2Fe-2S]-[ferredoxin]. Its pathway is protein modification; protein lipoylation via endogenous pathway; protein N(6)-(lipoyl)lysine from octanoyl-[acyl-carrier-protein]: step 2/2. Its function is as follows. Catalyzes the radical-mediated insertion of two sulfur atoms into the C-6 and C-8 positions of the octanoyl moiety bound to the lipoyl domains of lipoate-dependent enzymes, thereby converting the octanoylated domains into lipoylated derivatives. This chain is Lipoyl synthase, found in Vibrio cholerae serotype O1 (strain ATCC 39315 / El Tor Inaba N16961).